A 308-amino-acid polypeptide reads, in one-letter code: Coenzyme PQQ synthesis protein B (308 aa).

It belongs to the PqqB family.

It participates in cofactor biosynthesis; pyrroloquinoline quinone biosynthesis. May be involved in the transport of PQQ or its precursor to the periplasm. This chain is Coenzyme PQQ synthesis protein B, found in Klebsiella pneumoniae subsp. pneumoniae (strain ATCC 700721 / MGH 78578).